We begin with the raw amino-acid sequence, 228 residues long: tRNA (guanine-N(1)-)-methyltransferase (228 aa).

S-adenosyl-L-methionine contacts are provided by residues glycine 111 and 130-135 (IGDFVL).

It belongs to the RNA methyltransferase TrmD family. As to quaternary structure, homodimer.

The protein resides in the cytoplasm. The enzyme catalyses guanosine(37) in tRNA + S-adenosyl-L-methionine = N(1)-methylguanosine(37) in tRNA + S-adenosyl-L-homocysteine + H(+). In terms of biological role, specifically methylates guanosine-37 in various tRNAs. The chain is tRNA (guanine-N(1)-)-methyltransferase from Ureaplasma urealyticum serovar 10 (strain ATCC 33699 / Western).